The chain runs to 265 residues: Phosphate import ATP-binding protein PstB (265 aa).

The region spanning Ile18–Ile260 is the ABC transporter domain. Gly50–Ser57 lines the ATP pocket.

The protein belongs to the ABC transporter superfamily. Phosphate importer (TC 3.A.1.7) family. The complex is composed of two ATP-binding proteins (PstB), two transmembrane proteins (PstC and PstA) and a solute-binding protein (PstS).

The protein localises to the cell inner membrane. The catalysed reaction is phosphate(out) + ATP + H2O = ADP + 2 phosphate(in) + H(+). Part of the ABC transporter complex PstSACB involved in phosphate import. Responsible for energy coupling to the transport system. This is Phosphate import ATP-binding protein PstB from Ruegeria sp. (strain TM1040) (Silicibacter sp.).